The following is a 172-amino-acid chain: Small t antigen (172 aa).

Met-1 bears the N-acetylmethionine; by host mark. The J domain maps to 12-75 (ELMDLLGLER…VKVAHQPDFG (64 aa)). A C4-type; atypical zinc finger spans residues 101–114 (CATKPSAHCPCMLC). The H1C3-type; atypical zinc finger occupies 120 to 141 (HVYRKFLRRDPLVWIDCYCFDC).

As to quaternary structure, interacts with host PPP2R1A; the interaction inhibits PP2A activity.

Its subcellular location is the host cytoplasm. It localises to the host nucleus. In terms of biological role, promotes efficient viral genome replication by accelerating both G1 and S phase progression of the cell cycle. Inhibits host PP2A by binding to the A subunit, thereby displacing lower affinity regulatory B subunit. Inactivation of PP2A in turn results in the transactivation of cyclin A and cyclin D1 promoters. Late during the infection cycle, ST may induce dephosphorylation of host MTOR, leading to the inhibition of cap-dependent translation. May establish and maintain high levels of viral genomes during persistent infection in cell culture. The sequence is that of Small t antigen from Simian virus 12 (strain wt100) (SV-12).